Consider the following 420-residue polypeptide: Acetylornithine aminotransferase (420 aa).

Residues Gly118 to Ala119 and Phe151 each bind pyridoxal 5'-phosphate. Arg154 provides a ligand contact to N(2)-acetyl-L-ornithine. Asp242–Gln245 is a binding site for pyridoxal 5'-phosphate. An N6-(pyridoxal phosphate)lysine modification is found at Lys271. Ser298 contacts N(2)-acetyl-L-ornithine. Thr299 is a binding site for pyridoxal 5'-phosphate.

The protein belongs to the class-III pyridoxal-phosphate-dependent aminotransferase family. ArgD subfamily. Homodimer. It depends on pyridoxal 5'-phosphate as a cofactor.

Its subcellular location is the cytoplasm. It catalyses the reaction N(2)-acetyl-L-ornithine + 2-oxoglutarate = N-acetyl-L-glutamate 5-semialdehyde + L-glutamate. The protein operates within amino-acid biosynthesis; L-arginine biosynthesis; N(2)-acetyl-L-ornithine from L-glutamate: step 4/4. The protein is Acetylornithine aminotransferase of Parasynechococcus marenigrum (strain WH8102).